Consider the following 60-residue polypeptide: Large ribosomal subunit protein uL30 (60 aa).

The protein belongs to the universal ribosomal protein uL30 family. In terms of assembly, part of the 50S ribosomal subunit.

The sequence is that of Large ribosomal subunit protein uL30 from Agathobacter rectalis (strain ATCC 33656 / DSM 3377 / JCM 17463 / KCTC 5835 / VPI 0990) (Eubacterium rectale).